Reading from the N-terminus, the 115-residue chain is Salivary protein gSG6 (115 aa).

Residues 1-28 form the signal peptide; that stretch reads MAIRVELLLAMVLLPLLLLESVVPHAAA.

As to expression, female saliva (at protein level). Distal-lateral lobes of female salivary gland (at protein level). Not detected in male salivary gland (at protein level).

It is found in the secreted. In terms of biological role, required for efficient probing and blood feeding. The chain is Salivary protein gSG6 from Anopheles gambiae (African malaria mosquito).